The sequence spans 315 residues: MLEIEKPKIEIVEQSEDNTYGKFVVEPLERGYGITLGNSLRRILLSSLPGAAVTSVKIEGVLHEFATVPGVQEDVTDIILNLKNLCLKIHSDEEKVLRVEAQTEGPVTAGDIIHDADVEILNPDLHLATLDTGGRLFMEISVNKGRGYSSAEKNKKGEHIIGVIPIDSIYTPVRRVNYNVENTRVGQITDYDKLTLEVWTNGSIRPDEATSLSAKILSEHLRLFIGLTETVNDVEIMVEKEEEQKDKILEMTIEELDMSVRSYNCLKRAGINTVEELIQRNEEDMMKVRNLGKKSLEEVINKLHELGLSLRQEDE.

An alpha N-terminal domain (alpha-NTD) region spans residues 1-228 (MLEIEKPKIE…EHLRLFIGLT (228 aa)). The alpha C-terminal domain (alpha-CTD) stretch occupies residues 246-315 (DKILEMTIEE…LGLSLRQEDE (70 aa)).

It belongs to the RNA polymerase alpha chain family. As to quaternary structure, homodimer. The RNAP catalytic core consists of 2 alpha, 1 beta, 1 beta' and 1 omega subunit. When a sigma factor is associated with the core the holoenzyme is formed, which can initiate transcription.

The enzyme catalyses RNA(n) + a ribonucleoside 5'-triphosphate = RNA(n+1) + diphosphate. DNA-dependent RNA polymerase catalyzes the transcription of DNA into RNA using the four ribonucleoside triphosphates as substrates. The protein is DNA-directed RNA polymerase subunit alpha of Desulforamulus reducens (strain ATCC BAA-1160 / DSM 100696 / MI-1) (Desulfotomaculum reducens).